The chain runs to 211 residues: Large ribosomal subunit protein uL4 (211 aa).

Disordered stretches follow at residues 1 to 28 and 48 to 99; these read MAQAQVFDARTGRRSEMELKGPRFETEP and TAST…GPRY. Basic and acidic residues predominate over residues 10-28; sequence RTGRRSEMELKGPRFETEP.

The protein belongs to the universal ribosomal protein uL4 family. Part of the 50S ribosomal subunit.

One of the primary rRNA binding proteins, this protein initially binds near the 5'-end of the 23S rRNA. It is important during the early stages of 50S assembly. It makes multiple contacts with different domains of the 23S rRNA in the assembled 50S subunit and ribosome. Its function is as follows. Forms part of the polypeptide exit tunnel. The chain is Large ribosomal subunit protein uL4 from Rubrobacter xylanophilus (strain DSM 9941 / JCM 11954 / NBRC 16129 / PRD-1).